A 193-amino-acid polypeptide reads, in one-letter code: NADH-quinone oxidoreductase subunit B (193 aa).

[4Fe-4S] cluster contacts are provided by Cys-72, Cys-73, Cys-137, and Cys-167.

The protein belongs to the complex I 20 kDa subunit family. As to quaternary structure, NDH-1 is composed of 14 different subunits. Subunits NuoB, C, D, E, F, and G constitute the peripheral sector of the complex. The cofactor is [4Fe-4S] cluster.

Its subcellular location is the cell inner membrane. It catalyses the reaction a quinone + NADH + 5 H(+)(in) = a quinol + NAD(+) + 4 H(+)(out). In terms of biological role, NDH-1 shuttles electrons from NADH, via FMN and iron-sulfur (Fe-S) centers, to quinones in the respiratory chain. Couples the redox reaction to proton translocation (for every two electrons transferred, four hydrogen ions are translocated across the cytoplasmic membrane), and thus conserves the redox energy in a proton gradient. The chain is NADH-quinone oxidoreductase subunit B from Brucella abortus (strain S19).